The sequence spans 270 residues: BPI fold-containing family A member 5 (270 aa).

A signal peptide spans 1-19 (MFLAGSFIVLCGLLAQSTA). A disulfide bridge links cysteine 196 with cysteine 238.

It belongs to the BPI/LBP/Plunc superfamily. Plunc family. Expressed in interpapillar epithelium of the anterior part of the tongue.

It is found in the secreted. In terms of biological role, may play a role in innate immunity in the oral cavity. This is BPI fold-containing family A member 5 (Bpifa5) from Mus musculus (Mouse).